Here is a 755-residue protein sequence, read N- to C-terminus: Glucosylglycerol-phosphate synthase (755 aa).

This sequence belongs to the glycosyltransferase 20 family.

The enzyme catalyses ADP-alpha-D-glucose + sn-glycerol 3-phosphate = 2-O-(alpha-D-glucopyranosyl)-sn-glycerol 3-phosphate + ADP + H(+). It participates in glycan metabolism; glucosylglycerol biosynthesis. Involved in salt tolerance by producing GG-phosphate from ADP-glucose and glycerol-3-phosphate (G3P), an intermediate in the synthesis of the osmolyte glucosylglycerol (GG). This Pseudomonas anguilliseptica protein is Glucosylglycerol-phosphate synthase (ggpS).